A 2131-amino-acid polypeptide reads, in one-letter code: MPLSPPAQGDPGEPSPCRPPKKHTTFHLWRSKKKQQPAPPDCGVFVPHPLPAPAGEARALDVVDGKYVVRDSQEFPLHCGESQFFHTTSEALGSLLLESGIFKKSRAQPPEDNRRKPVLGKLGTLFTAGRRRNSRNGLESPTRSNAKPLSPKDVVASPKLPERESERSRSQSSQLKQTDTSEEGSPRENPREAEGELPESGGPAAPPDAELSPRWSSSAAAVAVQQCHENDSPQLEPLEAEGEPFPDATTTAKQLHSSPGNSSRQENAETPARSPGEDASPGAGHEQEAFLGVRGAPGSPTQERPAGGLGEAPNGAPSVCAEEGSLGPRNARSQPPKGASDLPGEPPAEGAAHTASSAQADCTARPKGHAHPAKVLTLDIYLSKTEGAQVDEPVVITPRAEDCGDWDDMEKRSSGRRSGRRRGSQKSTDSPGADAELPESAARDDAVFDDEVAPNAASDNASAEKKVKSPRAALDGGVASAASPESKPSPGTKGQLRGESDRSKQPPPASSPTKRKGRSRALEAVPAPPASGPRAPAKESPPKRVPDPSPVTKGTAAESGEEAARAIPRELPVKSSSLLPEIKPEHKRGPLPNHFNGRAEGGRSRELGRAAGAPGASDADGLKPRNHFGVGRSTVTTKVTLPAKPKHVELNLKTPKNLDSLGNEHNPFSQPVHKGNTATKISLFENKRTNSSPRHTDIRGQRNTPASSKTFVGRAKLNLAKKAKEMEQPEKKVMPNSPQNGVLVKETAIETKVTVSEEEILPATRGMNGDSSENQALGPQPNQDDKADVQTDAGCLSEPVASALIPVKDHKLLEKEDSEAADSKSLVLENVTDTAQDIPTTVDTKDLPPTAMPKPQHTFSDSQSPAESSPGPSLSLSAPAPGDVPKDTCVQSPISSFPCTDLKVSENHKGCVLPVSRQNNEKMPLLELGGETTPPLSTERSPEAVGSECPSRVLVQVRSFVLPVESTQDVSSQVIPESSEVREVQLPTCHSNEPEVVSVASCAPPQEEVLGNEHSHCTAELAAKSGPQVIPPASEKTLPIQAQSQGSRTPLMAESSPTNSPSSGNHLATPQRPDQTVTNGQDSPASLLNISAGSDDSVFDSSSDMEKFTEIIKQMDSAVCMPMKRKKARMPNSPAPHFAMPPIHEDHLEKVFDPKVFTFGLGKKKESQPEMSPALHLMQNLDTKSKLRPKRASAEQSVLFKSLHTNTNGNSEPLVMPEINDKENRDVTNGGIKRSRLEKSALFSSLLSSLPQDKIFSPSVTSVNTMTTAFSTSQNGSLSQSSVSQPTTEGAPPCGLNKEQSNLLPDNSLKVFNFNSSSTSHSSLKSPSHMEKYPQKEKTKEDLDSRSNLHLPETKFSELSKLKNDDMEKANHIESVIKSNLPNCANSDTDFMGLFKSSRYDPSISFSGMSLSDTMTLRGSVQNKLNPRPGKVVIYSEPDVSEKCIEVFSDIQDCSSWSLSPVILIKVVRGCWILYEQPNFEGHSIPLEEGELELSGLWGIEDILERHEEAESDKPVVIGSIRHVVQDYRVSHIDLFTEPEGLGILSSYFDDTEEMQGFGVMQKTCSMKVHWGTWLIYEEPGFQGVPFILEPGEYPDLSFWDTEEAYIGSMRPLKMGGRKVEFPTDPKVVVYEKPFFEGKCVELETGMCSFVMEGGETEEATGDDHLPFTSVGSMKVLRGIWVAYEKPGFTGHQYLLEEGEYRDWKAWGGYNGELQSLRPILGDFSNAHMIMYSEKNFGSKGSSIDVLGIVANLKETGYGVKTQSINVLSGVWVAYENPDFTGEQYILDKGFYTSFEDWGGKNCKISSVQPICLDSFTGPRRRNQIHLFSEPQFQGHSQSFEETTSQIDDSFSTKSCRVSGGSWVVYDGENFTGNQYVLEEGHYPCLSAMGCPPGATFKSLRFIDVEFSEPTIILFEREDFKGKKIELNAETVNLRSLGFNTQIRSVQVIGGIWVTYEYGSYRGRQFLLSPAEVPNWYEFSGCRQIGSLRPFVQKRIYFRLRNKATGLFMSTNGNLEDLKLLRIQVMEDVGADDQIWIYQEGCIKCRIAEDCCLTIVGSLVTSGSKLGLALDQNADSQFWSLKSDGRIYSKLKPNLVLDIKGGTQYDQNHIILNTVSKEKFTQVWEAMVLYT.

Disordered regions lie at residues 1 to 53 (MPLS…LPAP), 104 to 370 (KSRA…KGHA), 385 to 674 (TEGA…PVHK), 688 to 707 (RTNS…TPAS), and 723 to 743 (AKEM…NGVL). The segment covering 19–35 (PPKKHTTFHLWRSKKKQ) has biased composition (basic residues). Polar residues predominate over residues 135–147 (RNGLESPTRSNAK). Basic and acidic residues-rich tracts occupy residues 160 to 169 (LPERESERSR) and 184 to 194 (GSPRENPREAE). The segment covering 248 to 265 (ATTTAKQLHSSPGNSSRQ) has biased composition (polar residues). The span at 414–424 (SGRRSGRRRGS) shows a compositional bias: basic residues. Residues 479–490 (ASAASPESKPSP) are compositionally biased toward low complexity. A phosphoserine mark is found at serine 483 and serine 489. Composition is skewed to basic and acidic residues over residues 536–546 (PAKESPPKRVP) and 562–572 (EAARAIPRELP). The segment covering 609-619 (RAAGAPGASDA) has biased composition (low complexity). The span at 723–733 (AKEMEQPEKKV) shows a compositional bias: basic and acidic residues. Serine 737 and serine 756 each carry phosphoserine. 2 disordered regions span residues 758-791 (EEIL…DVQT) and 837-889 (DIPT…KDTC). The span at 769–782 (GDSSENQALGPQPN) shows a compositional bias: polar residues. Residues 864 to 881 (SPAESSPGPSLSLSAPAP) show a composition bias toward low complexity. Serine 892 carries the phosphoserine modification. 4 disordered regions span residues 926 to 947 (LELG…AVGS), 1041 to 1101 (QAQS…VFDS), 1271 to 1302 (STSQ…EQSN), and 1316 to 1348 (SSST…SRSN). Threonine 933 bears the Phosphothreonine mark. A compositionally biased stretch (polar residues) spans 1055–1089 (SSPTNSPSSGNHLATPQRPDQTVTNGQDSPASLLN). Low complexity-rich tracts occupy residues 1091–1101 (SAGSDDSVFDS), 1271–1288 (STSQ…QPTT), and 1316–1327 (SSSTSHSSLKSP). Positions 1328-1348 (SHMEKYPQKEKTKEDLDSRSN) are enriched in basic and acidic residues. 12 consecutive Beta/gamma crystallin 'Greek key' domains span residues 1430-1469 (GKVV…KVVR), 1470-1525 (GCWI…RHVV), 1531-1571 (SHID…KVHW), 1572-1614 (GTWL…RPLK), 1626-1678 (PKVV…KVLR), 1679-1721 (GIWV…RPIL), 1727-1769 (AHMI…NVLS), 1770-1812 (GVWV…QPIC), 1823-1860 (NQIH…RVSG), 1861-1904 (GSWV…RFID), 1910-1950 (PTII…QVIG), and 1951-1992 (GIWV…RPFV). Residues 1994–2127 (KRIYFRLRNK…EKFTQVWEAM (134 aa)) form the Ricin B-type lectin domain.

This sequence belongs to the beta/gamma-crystallin family.

Its function is as follows. May function as suppressor of malignant melanoma. It may exert its effects through interactions with the cytoskeleton. The sequence is that of Beta/gamma crystallin domain-containing protein 1 from Homo sapiens (Human).